Consider the following 325-residue polypeptide: Xylosidase/arabinosidase (325 aa).

The active-site Proton acceptor is the Asp-16. Glu-224 (proton donor) is an active-site residue.

The protein belongs to the glycosyl hydrolase 43 family.

The enzyme catalyses Hydrolysis of (1-&gt;4)-beta-D-xylans, to remove successive D-xylose residues from the non-reducing termini.. The catalysed reaction is Hydrolysis of terminal non-reducing alpha-L-arabinofuranoside residues in alpha-L-arabinosides.. The chain is Xylosidase/arabinosidase (xsa) from Bacteroides ovatus.